Reading from the N-terminus, the 472-residue chain is MPRSRRTDEVSQYVSRLGSTRTAARLRFPGGFSGASRKPRRVAMLSVHTSPLHQPGTGDAGGMNVYIVELAKRLAAINIEVEIFTRATTGSLAPTVELAPGVLVRHVDAGPYEGLAKEELPAQLCAFTHGVMQAWAGQRPGYYDLVHSHYWLSGQVGWLAAQRWGVPLVHAMHTMAKVKNAALAEGDTPEPAARVIGETQIVNASDRLIANTAEEADELVRFYDADPAAVAVVHPGVNLDRFRPFPQGSDELRPGNAPSGRAAARARLGLPQDALIPLFAGRIQPLKAPDVLLRAVAVLLDRDPSLRSRIVVPVVGGPSGSGLAKPEGLQKLAARLGIADVVRFHPPVGQERLADWFRAASVLVMPSYSESFGLVAIEAQATGTPVVAAAVGGLPVAVRDGVGGFLVQGHEPEAYARALGRFADAPELVERMGAAAAAHAQSFGWDTAASATADVYTAALSDHRRRARAHHG.

His48 lines the 1D-myo-inositol 3-phosphate pocket. UDP-N-acetyl-alpha-D-glucosamine is bound by residues 54–55 (QP) and Gly62. Residues 59–64 (DAGGMN), Lys117, Tyr150, Thr174, and Arg194 contribute to the 1D-myo-inositol 3-phosphate site. Arg282, Lys287, and Val348 together coordinate UDP-N-acetyl-alpha-D-glucosamine. Phe357, Arg358, and Ala360 together coordinate Mg(2+). Residues Glu370 and Glu378 each coordinate UDP-N-acetyl-alpha-D-glucosamine. Thr384 serves as a coordination point for Mg(2+).

This sequence belongs to the glycosyltransferase group 1 family. MshA subfamily. In terms of assembly, homodimer.

It carries out the reaction 1D-myo-inositol 3-phosphate + UDP-N-acetyl-alpha-D-glucosamine = 1D-myo-inositol 2-acetamido-2-deoxy-alpha-D-glucopyranoside 3-phosphate + UDP + H(+). Catalyzes the transfer of a N-acetyl-glucosamine moiety to 1D-myo-inositol 3-phosphate to produce 1D-myo-inositol 2-acetamido-2-deoxy-glucopyranoside 3-phosphate in the mycothiol biosynthesis pathway. The chain is D-inositol 3-phosphate glycosyltransferase from Streptomyces griseus subsp. griseus (strain JCM 4626 / CBS 651.72 / NBRC 13350 / KCC S-0626 / ISP 5235).